The chain runs to 239 residues: Guanylate kinase (239 aa).

The 179-residue stretch at 19–197 (GLLIVVTGAS…AVSELLAVQQ (179 aa)) folds into the Guanylate kinase-like domain. Residue 26–33 (GASGVGKG) coordinates ATP.

This sequence belongs to the guanylate kinase family.

The protein localises to the cytoplasm. It catalyses the reaction GMP + ATP = GDP + ADP. In terms of biological role, essential for recycling GMP and indirectly, cGMP. The protein is Guanylate kinase (gmk) of Deinococcus radiodurans (strain ATCC 13939 / DSM 20539 / JCM 16871 / CCUG 27074 / LMG 4051 / NBRC 15346 / NCIMB 9279 / VKM B-1422 / R1).